Reading from the N-terminus, the 225-residue chain is Octanoyltransferase (225 aa).

The BPL/LPL catalytic domain maps to 42–219 (KNRQASMIFC…SICSALEYIN (178 aa)). Substrate-binding positions include 79–86 (RGGKITWH), 149–151 (AIG), and 162–164 (GFA). Residue Cys-180 is the Acyl-thioester intermediate of the active site.

This sequence belongs to the LipB family.

Its subcellular location is the cytoplasm. The catalysed reaction is octanoyl-[ACP] + L-lysyl-[protein] = N(6)-octanoyl-L-lysyl-[protein] + holo-[ACP] + H(+). The protein operates within protein modification; protein lipoylation via endogenous pathway; protein N(6)-(lipoyl)lysine from octanoyl-[acyl-carrier-protein]: step 1/2. Functionally, catalyzes the transfer of endogenously produced octanoic acid from octanoyl-acyl-carrier-protein onto the lipoyl domains of lipoate-dependent enzymes. Lipoyl-ACP can also act as a substrate although octanoyl-ACP is likely to be the physiological substrate. This is Octanoyltransferase from Tropheryma whipplei (strain TW08/27) (Whipple's bacillus).